The following is a 191-amino-acid chain: MANFSTNQFKAGLKIMLDGEPCNILENELVKPGKGQAFSRVKIRKLVSGKVLEKTFKSGETVEGADVMEVELAYLYADGEFWHFMNNETFEQIGAEEKALGETVKWLVEGDICTITLWNGTPITVTAANFVEIDITETDPGLKGDTAGTGGKPATLATGAVVRVPLFVQIGEKVRIDTRSGEYVSRATKAQ.

Residue K34 is modified to N6-(3,6-diaminohexanoyl)-5-hydroxylysine.

The protein belongs to the elongation factor P family. Post-translationally, may be beta-lysylated on the epsilon-amino group of Lys-34 by the combined action of EpmA and EpmB, and then hydroxylated on the C5 position of the same residue by EpmC (if this protein is present). Lysylation is critical for the stimulatory effect of EF-P on peptide-bond formation. The lysylation moiety may extend toward the peptidyltransferase center and stabilize the terminal 3-CCA end of the tRNA. Hydroxylation of the C5 position on Lys-34 may allow additional potential stabilizing hydrogen-bond interactions with the P-tRNA.

Its subcellular location is the cytoplasm. It participates in protein biosynthesis; polypeptide chain elongation. Functionally, involved in peptide bond synthesis. Alleviates ribosome stalling that occurs when 3 or more consecutive Pro residues or the sequence PPG is present in a protein, possibly by augmenting the peptidyl transferase activity of the ribosome. Modification of Lys-34 is required for alleviation. This is Elongation factor P from Colwellia psychrerythraea (strain 34H / ATCC BAA-681) (Vibrio psychroerythus).